The following is an 899-amino-acid chain: Protein argonaute (899 aa).

The disordered stretch occupies residues 107–129; that stretch reads TQKPKRRGGRAGGMRGNRGGPST. Residues 116 to 125 are compositionally biased toward gly residues; the sequence is RAGGMRGNRG. Positions 229-313 constitute a PAZ domain; the sequence is SMCELLNENR…KQDDYCNSVL (85 aa). The 324-residue stretch at 555-878 folds into the Piwi domain; that stretch reads LVVVVIPGPK…LSKFCGEILG (324 aa).

It belongs to the argonaute family. Ago subfamily. As to quaternary structure, interacts with miR2. Highly specific binding to the mRNA m7G-cap. May be a component of the RNA-induced silencing complex (RISC), a sequence-specific, multicomponent nuclease that destroys or silences messenger RNAs homologous to the silencing trigger.

The protein resides in the cytoplasm. Plays an essential role in growth and, with Dicer, also involved in microRNA (miRNA)-mediated translational repression. The RNA interference pathway is implicated in antigenic variation having a role in regulation of variant-specific surface protein (VSP)-coding gene expression. Several VSP genes are transcribed but only transcripts encoding the VSP to be expressed accumulate. Antisense RNAs corresponding to the silenced VSP genes are detected. The protein is Protein argonaute of Giardia intestinalis (strain ATCC 50581 / GS clone H7) (Giardia lamblia).